The sequence spans 213 residues: Thymidylate kinase (213 aa).

An ATP-binding site is contributed by 10 to 17 (GLEGAGKT).

It belongs to the thymidylate kinase family.

The enzyme catalyses dTMP + ATP = dTDP + ADP. Phosphorylation of dTMP to form dTDP in both de novo and salvage pathways of dTTP synthesis. The protein is Thymidylate kinase of Salmonella choleraesuis (strain SC-B67).